A 200-amino-acid polypeptide reads, in one-letter code: NADH-quinone oxidoreductase subunit C (200 aa).

It belongs to the complex I 30 kDa subunit family. As to quaternary structure, NDH-1 is composed of 14 different subunits. Subunits NuoB, C, D, E, F, and G constitute the peripheral sector of the complex.

The protein resides in the cell inner membrane. The enzyme catalyses a quinone + NADH + 5 H(+)(in) = a quinol + NAD(+) + 4 H(+)(out). Functionally, NDH-1 shuttles electrons from NADH, via FMN and iron-sulfur (Fe-S) centers, to quinones in the respiratory chain. The immediate electron acceptor for the enzyme in this species is believed to be ubiquinone. Couples the redox reaction to proton translocation (for every two electrons transferred, four hydrogen ions are translocated across the cytoplasmic membrane), and thus conserves the redox energy in a proton gradient. The polypeptide is NADH-quinone oxidoreductase subunit C (Rhizobium etli (strain ATCC 51251 / DSM 11541 / JCM 21823 / NBRC 15573 / CFN 42)).